A 280-amino-acid polypeptide reads, in one-letter code: Undecaprenyl-diphosphatase (280 aa).

8 consecutive transmembrane segments (helical) span residues 1–21 (MTIL…FLPV), 41–61 (FVRA…LVLY), 87–107 (FDLY…GFLF), 115–135 (LGSV…MLFV), 147–167 (ITYP…FLPG), 186–206 (KAAA…ATLL), 226–246 (VLLV…KFFI), and 260–280 (YRIL…SLAV).

This sequence belongs to the UppP family.

Its subcellular location is the cell inner membrane. It carries out the reaction di-trans,octa-cis-undecaprenyl diphosphate + H2O = di-trans,octa-cis-undecaprenyl phosphate + phosphate + H(+). In terms of biological role, catalyzes the dephosphorylation of undecaprenyl diphosphate (UPP). Confers resistance to bacitracin. The sequence is that of Undecaprenyl-diphosphatase from Porphyromonas gingivalis (strain ATCC BAA-308 / W83).